The chain runs to 1450 residues: DNA-directed RNA polymerase RPB1 homolog (1450 aa).

Belongs to the RNA polymerase beta' chain family. As to quaternary structure, part of the viral DNA-directed RNA polymerase that consists of 8 polII-like subunits (RPB1, RPB2, RPB3, RPB5, RPB6, RPB7, RPB9, RPB10), a capping enzyme and a termination factor.

The protein resides in the virion. It catalyses the reaction RNA(n) + a ribonucleoside 5'-triphosphate = RNA(n+1) + diphosphate. Functionally, catalytic component of the DNA-directed RNA polymerase (RNAP) that catalyzes the transcription in the cytoplasm of viral DNA into RNA using the four ribonucleoside triphosphates as substrates. Forms the polymerase active center together with RPB2. Part of the core element with the central large cleft, the clamp element that moves to open and close the cleft and the jaws that are thought to grab the incoming DNA template. This is DNA-directed RNA polymerase RPB1 homolog from African swine fever virus (isolate Warthog/Namibia/Wart80/1980) (ASFV).